The chain runs to 122 residues: Small ribosomal subunit protein uS13 (122 aa).

The disordered stretch occupies residues 97–122 (PVRGQRTHTNARTRKGPAKAIAGKKK).

Belongs to the universal ribosomal protein uS13 family. In terms of assembly, part of the 30S ribosomal subunit. Forms a loose heterodimer with protein S19. Forms two bridges to the 50S subunit in the 70S ribosome.

Located at the top of the head of the 30S subunit, it contacts several helices of the 16S rRNA. In the 70S ribosome it contacts the 23S rRNA (bridge B1a) and protein L5 of the 50S subunit (bridge B1b), connecting the 2 subunits; these bridges are implicated in subunit movement. Contacts the tRNAs in the A and P-sites. The protein is Small ribosomal subunit protein uS13 of Rhizobium rhizogenes (strain K84 / ATCC BAA-868) (Agrobacterium radiobacter).